A 256-amino-acid chain; its full sequence is Thiazole synthase (256 aa).

Residue K97 is the Schiff-base intermediate with DXP of the active site. Residues G158, 184–185 (AG), and 206–207 (NT) contribute to the 1-deoxy-D-xylulose 5-phosphate site.

It belongs to the ThiG family. As to quaternary structure, homotetramer. Forms heterodimers with either ThiH or ThiS.

It is found in the cytoplasm. It catalyses the reaction [ThiS sulfur-carrier protein]-C-terminal-Gly-aminoethanethioate + 2-iminoacetate + 1-deoxy-D-xylulose 5-phosphate = [ThiS sulfur-carrier protein]-C-terminal Gly-Gly + 2-[(2R,5Z)-2-carboxy-4-methylthiazol-5(2H)-ylidene]ethyl phosphate + 2 H2O + H(+). The protein operates within cofactor biosynthesis; thiamine diphosphate biosynthesis. Catalyzes the rearrangement of 1-deoxy-D-xylulose 5-phosphate (DXP) to produce the thiazole phosphate moiety of thiamine. Sulfur is provided by the thiocarboxylate moiety of the carrier protein ThiS. In vitro, sulfur can be provided by H(2)S. In Flavobacterium psychrophilum (strain ATCC 49511 / DSM 21280 / CIP 103535 / JIP02/86), this protein is Thiazole synthase.